We begin with the raw amino-acid sequence, 1509 residues long: Dynein axonemal assembly factor 1 homolog (1509 aa).

6 LRR repeats span residues 34 to 56 (RLND…EEYT), 57 to 78 (ELKC…EKLS), 79 to 100 (KLKC…EPCR), 101 to 122 (ELDT…GTNI), 125 to 146 (VLNT…SDLV), and 150 to 171 (TLSV…KIFE). The LRRCT domain maps to 185-223 (PVVSRLPQYRKTLILACKELTYLDSRPVFPRDRACAEAW). 4 disordered regions span residues 252-280 (CTIR…DDTC), 306-327 (HPTS…ATSS), 962-1008 (SGDL…DSKN), and 1103-1122 (TLQT…KLRN). Over residues 309-318 (SESGASTSSS) the composition is skewed to low complexity. The span at 978-990 (SESEDYDTADDEY) shows a compositional bias: acidic residues. The span at 1103 to 1112 (TLQTSFSTVG) shows a compositional bias: polar residues.

It belongs to the DNAAF1 family.

It is found in the cell projection. The protein resides in the cilium. Cilium-specific protein required for cilia structures. This chain is Dynein axonemal assembly factor 1 homolog (dtr), found in Drosophila yakuba (Fruit fly).